Reading from the N-terminus, the 335-residue chain is Spike protein P1 (335 aa).

In terms of assembly, monomer.

The protein resides in the virion. Its function is as follows. Receptor binding protein located at the fivefold vertices. The polypeptide is Spike protein P1 (I) (Pseudoalteromonas espejiana (Bacteriophage PM2)).